The primary structure comprises 267 residues: Translation initiation factor 2 subunit alpha (267 aa).

The S1 motif domain occupies 10 to 81; that stretch reads GELVVGKVDD…SAQQIDLSLK (72 aa).

Belongs to the eIF-2-alpha family. As to quaternary structure, heterotrimer composed of an alpha, a beta and a gamma chain.

EIF-2 functions in the early steps of protein synthesis by forming a ternary complex with GTP and initiator tRNA. This is Translation initiation factor 2 subunit alpha from Halobacterium salinarum (strain ATCC 29341 / DSM 671 / R1).